Here is a 348-residue protein sequence, read N- to C-terminus: Selenide, water dikinase (348 aa).

The active site involves cysteine 17. ATP-binding positions include lysine 20 and 48–50 (TRD). Residue aspartate 51 participates in Mg(2+) binding. ATP contacts are provided by residues aspartate 68, aspartate 91, and 139–141 (GHS). Aspartate 91 contacts Mg(2+). Position 227 (aspartate 227) interacts with Mg(2+).

This sequence belongs to the selenophosphate synthase 1 family. Class I subfamily. As to quaternary structure, homodimer. The cofactor is Mg(2+).

It carries out the reaction hydrogenselenide + ATP + H2O = selenophosphate + AMP + phosphate + 2 H(+). Its function is as follows. Synthesizes selenophosphate from selenide and ATP. This is Selenide, water dikinase from Yersinia pestis.